The sequence spans 630 residues: Polypeptide N-acetylgalactosaminyltransferase 5 (630 aa).

Residues 1-20 are Cytoplasmic-facing; that stretch reads MTFSTFTRKMRGRMRSNTCR. The helical; Signal-anchor for type II membrane protein transmembrane segment at 21-38 threads the bilayer; the sequence is IVLLTSLVWVIFDFVLIA. The Lumenal portion of the chain corresponds to 39–630; that stretch reads RYSDCIGKDG…MESKFKWQAH (592 aa). N-linked (GlcNAc...) asparagine glycosylation occurs at N166. 5 cysteine pairs are disulfide-bonded: C177–C410, C401–C479, C513–C530, C553–C568, and C594–C611. The tract at residues 186-296 is catalytic subdomain A; sequence LPTTSIVIVF…EGWLEPLLAR (111 aa). Residues D227 and R257 each contribute to the substrate site. Residues D280 and H282 each contribute to the Mn(2+) site. Residues 356–418 form a catalytic subdomain B region; the sequence is PLRTPTMAGG…PCSHVGHVFR (63 aa). W387 contacts substrate. H415 is a binding site for Mn(2+). Substrate-binding residues include R418 and Y423. The region spanning 500-622 is the Ricin B-type lectin domain; that stretch reads YYLGEIRNAE…YGKGQQWLME (123 aa).

This sequence belongs to the glycosyltransferase 2 family. GalNAc-T subfamily. The cofactor is Mn(2+). In terms of tissue distribution, expressed during oogenesis, in the somatically derived follicle cells that surround the developing oocyte, which are involved in the maturation of the oocyte and construction of the egg shell, as well as playing a role in subsequent embryonic pattern formation. During embryonic stages 9-11, expressed in the primordium of the foregut, midgut and hindgut. Expressed in salivary glands from embryonic stage 12 onwards. During embryonic stages 12-13, expressed in the posterior midgut and hindgut. During embryonic stages 14-17, expressed in the hindgut and the posterior spiracles. Expression is also detected in the epidermis and antennomaxillary complex at embryonic stages 16-17. In third instar larvae, ubiquitously expressed in wing, eye-antennal, leg and haltere imaginal disks.

The protein resides in the golgi apparatus membrane. It carries out the reaction L-seryl-[protein] + UDP-N-acetyl-alpha-D-galactosamine = a 3-O-[N-acetyl-alpha-D-galactosaminyl]-L-seryl-[protein] + UDP + H(+). The catalysed reaction is L-threonyl-[protein] + UDP-N-acetyl-alpha-D-galactosamine = a 3-O-[N-acetyl-alpha-D-galactosaminyl]-L-threonyl-[protein] + UDP + H(+). It functions in the pathway protein modification; protein glycosylation. Its function is as follows. Catalyzes the initial reaction in O-linked oligosaccharide biosynthesis, the transfer of an N-acetyl-D-galactosamine residue to a serine or threonine residue on the protein receptor. It can both act as a peptide transferase that transfers GalNAc onto unmodified peptide substrates, and as a glycopeptide transferase that requires the prior addition of a GalNAc on a peptide before adding additional GalNAc moieties. Prefers EA2 as substrate. In the larval midgut, required for O-glycosylation of apical and luminal proteins within copper cells enabling proper gut acidification. This Drosophila melanogaster (Fruit fly) protein is Polypeptide N-acetylgalactosaminyltransferase 5.